A 21-amino-acid polypeptide reads, in one-letter code: Glucose-1-phosphate adenylyltransferase large subunit (21 aa).

Positions 1-21 are disordered; the sequence is SVTADNASETKVREIGQEKSS. Over residues 8 to 21 the composition is skewed to basic and acidic residues; sequence SETKVREIGQEKSS.

The protein belongs to the bacterial/plant glucose-1-phosphate adenylyltransferase family. As to quaternary structure, heterotetramer.

The protein localises to the plastid. It localises to the chloroplast. It is found in the amyloplast. It carries out the reaction alpha-D-glucose 1-phosphate + ATP + H(+) = ADP-alpha-D-glucose + diphosphate. It functions in the pathway glycan biosynthesis; starch biosynthesis. Its activity is regulated as follows. Activated by 3'phosphoglycerate, inhibited by orthophosphate. Allosteric regulation. Functionally, this protein plays a role in synthesis of starch. It catalyzes the synthesis of the activated glycosyl donor, ADP-glucose from Glc-1-P and ATP. In Spinacia oleracea (Spinach), this protein is Glucose-1-phosphate adenylyltransferase large subunit.